A 262-amino-acid polypeptide reads, in one-letter code: Beta-phosphoglucomutase (262 aa).

The Nucleophile role is filled by D29. D29 and D31 together coordinate Mg(2+). 4-aspartylphosphate is present on D29. D31 acts as the Proton donor/acceptor in catalysis. Positions 31, 79, 82, 157, and 159 each coordinate beta-D-glucose 6-phosphate. D215 is a Mg(2+) binding site.

The protein belongs to the HAD-like hydrolase superfamily. CbbY/CbbZ/Gph/YieH family. Monomer. The cofactor is Mg(2+). Autophosphorylated.

It catalyses the reaction beta-D-glucose 1-phosphate = beta-D-glucose 6-phosphate. In terms of biological role, catalyzes the interconversion of D-glucose 1-phosphate (G1P) and D-glucose 6-phosphate (G6P), forming beta-D-glucose 1,6-(bis)phosphate (beta-G16P) as an intermediate. In Mycobacterium bovis (strain ATCC BAA-935 / AF2122/97), this protein is Beta-phosphoglucomutase.